Here is a 479-residue protein sequence, read N- to C-terminus: Bifunctional protein HldE (479 aa).

Residues 1–322 are ribokinase; sequence MIDDFRFGRI…RELLQEMPET (322 aa). 198 to 201 contributes to the ATP binding site; that stretch reads NRIE. Aspartate 267 is a catalytic residue. The tract at residues 347–479 is cytidylyltransferase; it reads FTNGCFDLVH…LVRGMQSAPS (133 aa).

This sequence in the N-terminal section; belongs to the carbohydrate kinase PfkB family. It in the C-terminal section; belongs to the cytidylyltransferase family. In terms of assembly, homodimer.

It carries out the reaction D-glycero-beta-D-manno-heptose 7-phosphate + ATP = D-glycero-beta-D-manno-heptose 1,7-bisphosphate + ADP + H(+). The enzyme catalyses D-glycero-beta-D-manno-heptose 1-phosphate + ATP + H(+) = ADP-D-glycero-beta-D-manno-heptose + diphosphate. It participates in nucleotide-sugar biosynthesis; ADP-L-glycero-beta-D-manno-heptose biosynthesis; ADP-L-glycero-beta-D-manno-heptose from D-glycero-beta-D-manno-heptose 7-phosphate: step 1/4. It functions in the pathway nucleotide-sugar biosynthesis; ADP-L-glycero-beta-D-manno-heptose biosynthesis; ADP-L-glycero-beta-D-manno-heptose from D-glycero-beta-D-manno-heptose 7-phosphate: step 3/4. In terms of biological role, catalyzes the phosphorylation of D-glycero-D-manno-heptose 7-phosphate at the C-1 position to selectively form D-glycero-beta-D-manno-heptose-1,7-bisphosphate. Its function is as follows. Catalyzes the ADP transfer from ATP to D-glycero-beta-D-manno-heptose 1-phosphate, yielding ADP-D-glycero-beta-D-manno-heptose. This Gluconobacter oxydans (strain 621H) (Gluconobacter suboxydans) protein is Bifunctional protein HldE.